The following is a 465-amino-acid chain: UDP-N-acetylmuramate--L-alanine ligase (465 aa).

112-118 (GTHGKTT) provides a ligand contact to ATP.

The protein belongs to the MurCDEF family.

Its subcellular location is the cytoplasm. The catalysed reaction is UDP-N-acetyl-alpha-D-muramate + L-alanine + ATP = UDP-N-acetyl-alpha-D-muramoyl-L-alanine + ADP + phosphate + H(+). It participates in cell wall biogenesis; peptidoglycan biosynthesis. Cell wall formation. The chain is UDP-N-acetylmuramate--L-alanine ligase from Burkholderia cenocepacia (strain ATCC BAA-245 / DSM 16553 / LMG 16656 / NCTC 13227 / J2315 / CF5610) (Burkholderia cepacia (strain J2315)).